The primary structure comprises 402 residues: Propionate kinase (402 aa).

Asparagine 11 and lysine 18 together coordinate ATP. Residue asparagine 11 participates in Mg(2+) binding. Arginine 86 lines the substrate pocket. The active-site Proton donor/acceptor is the aspartate 143. Residues histidine 175, 203 to 207 (HLGNG), 278 to 280 (DLR), and 326 to 330 (GIGEN) each bind ATP.

It belongs to the acetokinase family. TdcD subfamily. As to quaternary structure, homodimer. Mg(2+) serves as cofactor.

The enzyme catalyses propanoate + ATP = propanoyl phosphate + ADP. It participates in amino-acid degradation; L-threonine degradation via propanoate pathway; propanoate from L-threonine: step 4/4. Catalyzes the conversion of propionyl phosphate and ADP to propionate and ATP. The sequence is that of Propionate kinase from Citrobacter koseri (strain ATCC BAA-895 / CDC 4225-83 / SGSC4696).